The sequence spans 23 residues: Acidic phospholipase A2 Cvv-E6c (23 aa).

It depends on Ca(2+) as a cofactor. Post-translationally, contains 7 disulfide bonds. As to expression, expressed by the venom gland.

It localises to the secreted. The catalysed reaction is a 1,2-diacyl-sn-glycero-3-phosphocholine + H2O = a 1-acyl-sn-glycero-3-phosphocholine + a fatty acid + H(+). In terms of biological role, snake venom phospholipase A2 (PLA2) that significantly inhibits ADP-induced platelet aggregation in platelet-rich plasma of human, rabbit and guinea pig. PLA2 catalyzes the calcium-dependent hydrolysis of the 2-acyl groups in 3-sn-phosphoglycerides. The sequence is that of Acidic phospholipase A2 Cvv-E6c from Crotalus viridis viridis (Prairie rattlesnake).